The primary structure comprises 409 residues: tRNA(Met) cytidine acetate ligase (409 aa).

Residues 7-20 (VVEY…HLYH), glycine 102, asparagine 169, and arginine 194 contribute to the ATP site.

Belongs to the TmcAL family.

It localises to the cytoplasm. The catalysed reaction is cytidine(34) in elongator tRNA(Met) + acetate + ATP = N(4)-acetylcytidine(34) in elongator tRNA(Met) + AMP + diphosphate. In terms of biological role, catalyzes the formation of N(4)-acetylcytidine (ac(4)C) at the wobble position of elongator tRNA(Met), using acetate and ATP as substrates. First activates an acetate ion to form acetyladenylate (Ac-AMP) and then transfers the acetyl group to tRNA to form ac(4)C34. The chain is tRNA(Met) cytidine acetate ligase from Clostridium botulinum (strain ATCC 19397 / Type A).